The following is a 789-amino-acid chain: Zinc finger FYVE domain-containing protein 1 (789 aa).

Positions 416–788 (MAHSSFFPDE…LSVMTGKGPL (373 aa)) are required for localization in the lipid droplets. FYVE-type zinc fingers lie at residues 598-659 (NSQI…EARN) and 715-775 (DHEI…KKPA). Zn(2+) is bound by residues Cys-604, Cys-607, Cys-620, Cys-623, Cys-628, Cys-631, Cys-651, Cys-654, Cys-721, Cys-724, Cys-737, Cys-740, Cys-745, Cys-748, Cys-767, and Cys-770.

As to quaternary structure, interacts with RAB18 (in GTP-bound form). Interacts with BSCL2 in a RAB18-dependent manner. Interacts with ZW10.

It is found in the golgi apparatus. It localises to the golgi stack. Its subcellular location is the endoplasmic reticulum. The protein localises to the preautophagosomal structure. The protein resides in the lipid droplet. It is found in the mitochondrion. Functionally, plays a role in the formation of lipid droplets (LDs) which are storage organelles at the center of lipid and energy homeostasis. Regulates the morphology, size and distribution of LDs. Mediates the formation of endoplasmic reticulum-lipid droplets (ER-LD) contact sites by forming a complex with RAB18 and ZW10. Binds to phosphatidylinositol 3-phosphate (PtdIns3P) through FYVE-type zinc finger. The protein is Zinc finger FYVE domain-containing protein 1 (ZFYVE1) of Pongo abelii (Sumatran orangutan).